Consider the following 512-residue polypeptide: Probable malate:quinone oxidoreductase (512 aa).

This sequence belongs to the MQO family. The cofactor is FAD.

It catalyses the reaction (S)-malate + a quinone = a quinol + oxaloacetate. Its pathway is carbohydrate metabolism; tricarboxylic acid cycle; oxaloacetate from (S)-malate (quinone route): step 1/1. The chain is Probable malate:quinone oxidoreductase from Bradyrhizobium diazoefficiens (strain JCM 10833 / BCRC 13528 / IAM 13628 / NBRC 14792 / USDA 110).